The sequence spans 360 residues: DNA replication and repair protein RecF (360 aa).

30 to 37 (GQNGSGKT) provides a ligand contact to ATP.

It belongs to the RecF family.

The protein localises to the cytoplasm. In terms of biological role, the RecF protein is involved in DNA metabolism; it is required for DNA replication and normal SOS inducibility. RecF binds preferentially to single-stranded, linear DNA. It also seems to bind ATP. This Shewanella oneidensis (strain ATCC 700550 / JCM 31522 / CIP 106686 / LMG 19005 / NCIMB 14063 / MR-1) protein is DNA replication and repair protein RecF.